We begin with the raw amino-acid sequence, 180 residues long: Progesterone receptor (180 aa).

An NR C4-type zinc finger spans residues 1 to 11; that stretch reads KNCPACRLRKC. The segment at residues 1–16 is a DNA-binding region (nuclear receptor); that stretch reads KNCPACRLRKCCQAGM. S60 bears the Phosphoserine mark. Residues 63–180 form the NR LBD domain; sequence QEIQLFPPLI…QRMKESSFYS (118 aa). Positions 71-180 are AF2; mediates transcriptional activation; that stretch reads LINLLLSIEP…QRMKESSFYS (110 aa). Position 150 (R150) interacts with progesterone.

Belongs to the nuclear hormone receptor family. NR3 subfamily. Interacts with SMARD1 and UNC45A. Interacts with CUEDC2; the interaction promotes ubiquitination, decreases sumoylation, and represses transcriptional activity. Interacts with PIAS3; the interaction promotes sumoylation of PR in a hormone-dependent manner, inhibits DNA-binding, and alters nuclear export. Interacts with SP1; the interaction requires ligand-induced phosphorylation by ERK1/2-MAPK. Interacts with PRMT2. Interacts with NCOA2 and NCOA1. Interacts with KLF9. Interacts with GTF2B. In terms of processing, phosphorylated on multiple serine sites. Several of these sites are hormone-dependent. Post-translationally, sumoylation is hormone-dependent and represses transcriptional activity. Sumoylation on all three sites is enhanced by PIAS3. Desumoylated by SENP1. Sumoylation is repressed by ubiquitination and modulated by phosphorylation. Ubiquitination is hormone-dependent and represses sumoylation. In terms of processing, palmitoylated by ZDHHC7 and ZDHHC21. Palmitoylation is required for plasma membrane targeting and for rapid intracellular signaling via ERK and AKT kinases and cAMP generation.

It is found in the nucleus. It localises to the cytoplasm. Its function is as follows. The steroid hormones and their receptors are involved in the regulation of eukaryotic gene expression and affect cellular proliferation and differentiation in target tissues. Transcriptional activator of several progesteron-dependent promoters in a variety of cell types. Involved in activation of SRC-dependent MAPK signaling on hormone stimulation. The protein is Progesterone receptor (PGR) of Notamacropus eugenii (Tammar wallaby).